The following is a 307-amino-acid chain: B3 domain-containing protein At5g18000 (307 aa).

A DNA-binding region (TF-B3 1) is located at residues 20–115; the sequence is FFKILRREDH…CFNVTIFEAD (96 aa). Disordered regions lie at residues 122–141 and 151–209; these read PRKT…RKSI and IESW…SEAG. Residues 166–177 are compositionally biased toward polar residues; that stretch reads ESTSGRLTQKQE. A compositionally biased stretch (basic and acidic residues) spans 178–192; sequence LNLRKKEADKTEKSK. The segment at residues 214-307 is a DNA-binding region (TF-B3 2); the sequence is IPEFKLTIKK…TEMRVKVSKE (94 aa).

The protein localises to the nucleus. The chain is B3 domain-containing protein At5g18000 from Arabidopsis thaliana (Mouse-ear cress).